Reading from the N-terminus, the 870-residue chain is Patatin-like phospholipase domain-containing protein NCU11180 (870 aa).

Disordered regions lie at residues 1–24 and 131–158; these read MADD…PPEA and KVIK…KGVA. Basic and acidic residues predominate over residues 131–141; sequence KVIKTDRDEKR. Positions 142 to 155 are enriched in basic residues; it reads NKRGKDRKNKKPRK. The chain crosses the membrane as a helical span at residues 183-203; the sequence is WPFLLFVSFWIVGLGMAYLAT. The interval 281 to 320 is disordered; it reads EEVERELESQSQNSDSGVASGEETSNTKAGGGNNGNDKKT. Residues 289–308 show a composition bias toward polar residues; sequence SQSQNSDSGVASGEETSNTK. A PNPLA domain is found at 399–590; it reads LCLSGGATFA…RTDIPIKSLN (192 aa). A GXSXG motif is present at residues 430 to 434; it reads GTSGG. The active-site Nucleophile is the S432. D577 (proton acceptor) is an active-site residue. Disordered stretches follow at residues 735 to 786 and 804 to 870; these read RRET…DRRG and GREG…HSRT. Positions 818-834 are enriched in acidic residues; that stretch reads TEDELTMTELEGEDDDG.

Belongs to the PLPL family.

It is found in the membrane. Probable lipid hydrolase. This is Patatin-like phospholipase domain-containing protein NCU11180 from Neurospora crassa (strain ATCC 24698 / 74-OR23-1A / CBS 708.71 / DSM 1257 / FGSC 987).